Reading from the N-terminus, the 74-residue chain is Large ribosomal subunit protein bL31 (74 aa).

Cysteine 16, cysteine 18, cysteine 38, and cysteine 41 together coordinate Zn(2+).

It belongs to the bacterial ribosomal protein bL31 family. Type A subfamily. Part of the 50S ribosomal subunit. It depends on Zn(2+) as a cofactor.

In terms of biological role, binds the 23S rRNA. The sequence is that of Large ribosomal subunit protein bL31 (rpmE) from Streptomyces coelicolor (strain ATCC BAA-471 / A3(2) / M145).